The primary structure comprises 184 residues: Photosystem I assembly protein Ycf4 (184 aa).

The next 2 helical transmembrane spans lie at Asn-21–Tyr-43 and Leu-58–Leu-80.

Belongs to the Ycf4 family.

The protein resides in the plastid. It is found in the chloroplast thylakoid membrane. Seems to be required for the assembly of the photosystem I complex. This chain is Photosystem I assembly protein Ycf4, found in Marchantia polymorpha (Common liverwort).